A 130-amino-acid chain; its full sequence is MGKEAATRVRRRERKNIASGVAHVNSSFNNTTITITDAQGNTIAWSSAGTMGFKGSRKSTPYAAQVAAEDVSKKAQEHGMRTLEVEVAGPGSGRESALRALQAAGFTVTSIRDVTAIPHNGCRPRKRRRV.

This sequence belongs to the universal ribosomal protein uS11 family. As to quaternary structure, part of the 30S ribosomal subunit. Interacts with proteins S7 and S18. Binds to IF-3.

Located on the platform of the 30S subunit, it bridges several disparate RNA helices of the 16S rRNA. Forms part of the Shine-Dalgarno cleft in the 70S ribosome. This chain is Small ribosomal subunit protein uS11, found in Nitrobacter hamburgensis (strain DSM 10229 / NCIMB 13809 / X14).